Reading from the N-terminus, the 128-residue chain is Large ribosomal subunit protein uL22 (128 aa).

Belongs to the universal ribosomal protein uL22 family. In terms of assembly, part of the 50S ribosomal subunit.

In terms of biological role, this protein binds specifically to 23S rRNA; its binding is stimulated by other ribosomal proteins, e.g. L4, L17, and L20. It is important during the early stages of 50S assembly. It makes multiple contacts with different domains of the 23S rRNA in the assembled 50S subunit and ribosome. Its function is as follows. The globular domain of the protein is located near the polypeptide exit tunnel on the outside of the subunit, while an extended beta-hairpin is found that lines the wall of the exit tunnel in the center of the 70S ribosome. This chain is Large ribosomal subunit protein uL22, found in Prochlorococcus marinus (strain MIT 9301).